The primary structure comprises 233 residues: Octanoyltransferase (233 aa).

The BPL/LPL catalytic domain occupies 36-211 (DTTPDEIWLV…EFTRQLGYPT (176 aa)). Residues 75–82 (RGGQITYH), 142–144 (SLG), and 155–157 (GLA) contribute to the substrate site. Cys173 serves as the catalytic Acyl-thioester intermediate.

Belongs to the LipB family.

Its subcellular location is the cytoplasm. The enzyme catalyses octanoyl-[ACP] + L-lysyl-[protein] = N(6)-octanoyl-L-lysyl-[protein] + holo-[ACP] + H(+). Its pathway is protein modification; protein lipoylation via endogenous pathway; protein N(6)-(lipoyl)lysine from octanoyl-[acyl-carrier-protein]: step 1/2. Catalyzes the transfer of endogenously produced octanoic acid from octanoyl-acyl-carrier-protein onto the lipoyl domains of lipoate-dependent enzymes. Lipoyl-ACP can also act as a substrate although octanoyl-ACP is likely to be the physiological substrate. The sequence is that of Octanoyltransferase from Yersinia pseudotuberculosis serotype O:1b (strain IP 31758).